Reading from the N-terminus, the 316-residue chain is Ornithine carbamoyltransferase (316 aa).

Residues 59–62 (STRT), Gln-86, Arg-110, and 137–140 (HPCQ) contribute to the carbamoyl phosphate site. L-ornithine contacts are provided by residues Asn-168, Asp-232, and 236–237 (SM). Carbamoyl phosphate is bound by residues 273–274 (CL) and Arg-301.

This sequence belongs to the aspartate/ornithine carbamoyltransferase superfamily. OTCase family.

It localises to the cytoplasm. It carries out the reaction carbamoyl phosphate + L-ornithine = L-citrulline + phosphate + H(+). Its pathway is amino-acid biosynthesis; L-arginine biosynthesis; L-arginine from L-ornithine and carbamoyl phosphate: step 1/3. Reversibly catalyzes the transfer of the carbamoyl group from carbamoyl phosphate (CP) to the N(epsilon) atom of ornithine (ORN) to produce L-citrulline. The polypeptide is Ornithine carbamoyltransferase (argF) (Listeria monocytogenes serovar 1/2a (strain ATCC BAA-679 / EGD-e)).